A 330-amino-acid chain; its full sequence is Putative zinc finger protein CONSTANS-LIKE 11 (330 aa).

Zn(2+) is bound by residues cysteine 5, cysteine 8, cysteine 28, and histidine 33. The B box-type 1; atypical zinc-finger motif lies at 5 to 47; sequence CDFCGTEKALIYCKSDSAKLCLNCDVNVHSANPLSQRHTRSLL. The segment at 48 to 88 adopts a B box-type 2; degenerate zinc-finger fold; the sequence is CEKCSLQPTAVHCMNENVSLCQGCQWTASNCTGLGHRLQSL. Positions 276-318 constitute a CCT domain; the sequence is RDEAKKRYKQKKSKRMFGKQIRYASRKARADTRKRVKGRFVKS.

This sequence belongs to the CONSTANS family.

The protein resides in the nucleus. The protein is Putative zinc finger protein CONSTANS-LIKE 11 (COL11) of Arabidopsis thaliana (Mouse-ear cress).